A 717-amino-acid polypeptide reads, in one-letter code: Copine family protein 5 (717 aa).

A C2 domain is found at 193 to 318 (YLGGIIVSAE…KYGPGSDNVY (126 aa)). The VWFA domain occupies 377 to 567 (ELDQRRFDGE…LNKSRIAETA (191 aa)).

It belongs to the copine family.

The polypeptide is Copine family protein 5 (cpna-5) (Caenorhabditis elegans).